Reading from the N-terminus, the 413-residue chain is F-box protein CPR1 (413 aa).

The F-box domain occupies 1 to 48 (MATIPMDIVNDIFLRLPAKTLVRCRALSKPCYHLINDPDFIESHLHRV).

As to quaternary structure, part of a SCF (ASK-cullin-F-box) protein ligase complex. Interacts with SKP1A/ASK1, SPK1B/ASK2, ASK9, ASK10, ASK11, ASK13, ASK14, ASK16, ASK17, ASK18 and ASK19. Interacts with TRAF1B. In terms of tissue distribution, expressed in seedling, root, stem, leaves, inflorescence and silique, especially in veins and trichomes.

The protein localises to the cytoplasm. The protein resides in the nucleus. It functions in the pathway protein modification; protein ubiquitination. In terms of biological role, component of SCF(ASK-cullin-F-box) E3 ubiquitin ligase complexes, which may mediate the ubiquitination and subsequent proteasomal degradation of target proteins. Regulates negatively both salicylic acid (SA)-dependent and SA-independent defense signaling. The polypeptide is F-box protein CPR1 (CPR1) (Arabidopsis thaliana (Mouse-ear cress)).